Consider the following 511-residue polypeptide: Vicilin-like seed storage protein At2g28490 (511 aa).

The first 27 residues, 1 to 27, serve as a signal peptide directing secretion; it reads MEKNKRAIGFLLLVVLINGVMMTRSNG. Residues 54–81 are disordered; sequence GGGGGGAWGGEGEGGGEWGGGGEGGGGG. Cupin type-1 domains are found at residues 86-238 and 329-480; these read FMMR…PELQ and YNIY…ETMR. N-linked (GlcNAc...) asparagine glycans are attached at residues Asn-231, Asn-369, Asn-403, and Asn-464.

This sequence belongs to the 7S seed storage protein family.

Seed storage protein. This Arabidopsis thaliana (Mouse-ear cress) protein is Vicilin-like seed storage protein At2g28490.